An 811-amino-acid chain; its full sequence is Metal transporter cnnm-1 (811 aa).

A signal peptide spans 1–24 (MSASCLRLLTLSLFILGQCNVTAA). Residues asparagine 20, asparagine 49, asparagine 61, and asparagine 122 are each glycosylated (N-linked (GlcNAc...) asparagine). Over 25–204 (QNGVDDEVTT…KEYFLPLPLQ (180 aa)) the chain is Extracellular. Positions 197-376 (YFLPLPLQIA…TDNGQVSNEL (180 aa)) constitute a CNNM transmembrane domain. The helical transmembrane segment at 205-225 (IACIGFLLCLSALFSGLTLGL) threads the bilayer. Residues 226–259 (MSLTPQELELVIKSGAIKEQKCAAKILPVRKKGN) lie on the Cytoplasmic side of the membrane. A helical transmembrane segment spans residues 260-280 (LLLCSLLLGNVIVNSAISILM). The Extracellular portion of the chain corresponds to 281 to 284 (GELT). Residues 285-305 (TGIYALIGSTMGIVIFGEILP) traverse the membrane as a helical segment. At 306–315 (QSICVKKGLE) the chain is on the cytoplasmic side. The chain crosses the membrane as a helical span at residues 316-336 (VGAHTISITQLFIFLTFPIAW). The Extracellular portion of the chain corresponds to 337-811 (PVSKLLDCLL…EEEMALLDQP (475 aa)). CBS domains lie at 394–456 (MTKI…NFTV) and 462–530 (YHKH…INDE). Asparagine 435 and asparagine 453 each carry an N-linked (GlcNAc...) asparagine glycan. Positions 741–760 (DVSHNSSAHNSNLSLVEKPG) are disordered. Over residues 743–755 (SHNSSAHNSNLSL) the composition is skewed to low complexity. N-linked (GlcNAc...) asparagine glycosylation is found at asparagine 745 and asparagine 752.

Belongs to the ACDP family. In terms of tissue distribution, highly expressed in the intestine and in neurons, but it is also expressed in a variety of tissues including the pharynx, hypodermis, rectum and in muscles.

The protein resides in the basolateral cell membrane. Its function is as follows. Probable metal transporter. Probably acts redundantly with the other metal transport proteins cnnm-2, cnnm-3, cnnm-4 and cnnm-5 to regulate Mg(2+) homeostasis. Promotes postembryonic gonad development by regulating Mg(2+) levels, probably via AMPK signaling. This Caenorhabditis elegans protein is Metal transporter cnnm-1.